The following is an 86-amino-acid chain: UPF0297 protein SERP1181 (86 aa).

The protein belongs to the UPF0297 family.

This chain is UPF0297 protein SERP1181, found in Staphylococcus epidermidis (strain ATCC 35984 / DSM 28319 / BCRC 17069 / CCUG 31568 / BM 3577 / RP62A).